The following is a 146-amino-acid chain: MKLTPEMLTGKSREHLVNLPTTHSSNHFLQTQAVQAFQALQQSAAKNGFNLQPASSFRDFERQQLIWNSKFKGERKVHDDAGKALDLNQLDDWQKCQAILRWSALLRLVVIIGERKWIFLILIFCHEVNLYNWSLGNMKKAATSLN.

This is an uncharacterized protein from Haemophilus influenzae (strain ATCC 51907 / DSM 11121 / KW20 / Rd).